We begin with the raw amino-acid sequence, 466 residues long: Adenosylhomocysteinase (466 aa).

3 residues coordinate substrate: T57, D132, and E192. An NAD(+)-binding site is contributed by 193–195 (TTT). 2 residues coordinate substrate: K222 and D226. NAD(+)-binding positions include N227, 256 to 261 (GYGDVG), E279, N314, 335 to 337 (IGH), and N380.

It belongs to the adenosylhomocysteinase family. Requires NAD(+) as cofactor.

It is found in the cytoplasm. The catalysed reaction is S-adenosyl-L-homocysteine + H2O = L-homocysteine + adenosine. Its pathway is amino-acid biosynthesis; L-homocysteine biosynthesis; L-homocysteine from S-adenosyl-L-homocysteine: step 1/1. In terms of biological role, may play a key role in the regulation of the intracellular concentration of adenosylhomocysteine. The sequence is that of Adenosylhomocysteinase from Rhizobium meliloti (strain 1021) (Ensifer meliloti).